A 377-amino-acid polypeptide reads, in one-letter code: 4-hydroxy-3-methylbut-2-en-1-yl diphosphate synthase (flavodoxin) (377 aa).

[4Fe-4S] cluster is bound by residues Cys275, Cys278, Cys310, and Glu317.

The protein belongs to the IspG family. [4Fe-4S] cluster serves as cofactor.

The enzyme catalyses (2E)-4-hydroxy-3-methylbut-2-enyl diphosphate + oxidized [flavodoxin] + H2O + 2 H(+) = 2-C-methyl-D-erythritol 2,4-cyclic diphosphate + reduced [flavodoxin]. Its pathway is isoprenoid biosynthesis; isopentenyl diphosphate biosynthesis via DXP pathway; isopentenyl diphosphate from 1-deoxy-D-xylulose 5-phosphate: step 5/6. In terms of biological role, converts 2C-methyl-D-erythritol 2,4-cyclodiphosphate (ME-2,4cPP) into 1-hydroxy-2-methyl-2-(E)-butenyl 4-diphosphate. This chain is 4-hydroxy-3-methylbut-2-en-1-yl diphosphate synthase (flavodoxin), found in Ruegeria sp. (strain TM1040) (Silicibacter sp.).